A 742-amino-acid polypeptide reads, in one-letter code: ATP-dependent RNA helicase DBP7 (742 aa).

Residues 45–100 (GKTVSRKRKANTTGDEGIIPGRGENSIKKLHKESSYSSEEQEKYKGRNAHNTQGRT) are disordered. Positions 143 to 172 (DQFASLGVTSLLVSHLEQKMRIKKPTSIQK) match the Q motif motif. Positions 178–372 (IIGNAGKNDF…NVALKDYKLI (195 aa)) constitute a Helicase ATP-binding domain. Position 191 to 198 (191 to 198 (AQTGSGKT)) interacts with ATP. The short motif at 307-310 (DEGD) is the DEAD box element. A Helicase C-terminal domain is found at 405–605 (TLAATLNNIT…ILMPAFKDVN (201 aa)). A disordered region spans residues 701–726 (AMGLQSSKDGNSEKKPTKENSKNKMF). Residues 710-722 (GNSEKKPTKENSK) show a composition bias toward basic and acidic residues.

It belongs to the DEAD box helicase family. DDX31/DBP7 subfamily.

The protein localises to the nucleus. It is found in the nucleolus. It catalyses the reaction ATP + H2O = ADP + phosphate + H(+). In terms of biological role, ATP-binding RNA helicase involved in the biogenesis of 60S ribosomal subunits and is required for the normal formation of 25S and 5.8S rRNAs. This Saccharomyces cerevisiae (strain YJM789) (Baker's yeast) protein is ATP-dependent RNA helicase DBP7 (DBP7).